The following is a 282-amino-acid chain: Kanosamine-6-phosphate phosphatase (282 aa).

The active-site Nucleophile is D25. Residues D25 and D27 each coordinate Mg(2+). Residue K209 participates in phosphate binding. D232 and S233 together coordinate Mg(2+). Residue N235 participates in phosphate binding.

The protein belongs to the HAD-like hydrolase superfamily. Cof family. In terms of assembly, homotetramer. Mg(2+) serves as cofactor.

It catalyses the reaction D-kanosamine 6-phosphate + H2O = kanosamine + phosphate. It functions in the pathway antibiotic biosynthesis; kanosamine biosynthesis. Its function is as follows. Involved in the biosynthesis of kanosamine (3-amino-3-deoxy-D-glucose), which is known to have antibiotic and antifungal properties, and to be a precursor of the antibiotic neotrehalosadiamine (3,3'-diamino-3,3'-dideoxy-alpha,beta-trehalose (NTD)). Catalyzes the dephosphorylation of kanosamine 6-phosphate to yield kanosamine. There is a trace amount of activity using glucosamine-6-phosphate. The chain is Kanosamine-6-phosphate phosphatase (ntdB) from Bacillus subtilis (strain 168).